Consider the following 206-residue polypeptide: Imidazoleglycerol-phosphate dehydratase (206 aa).

This sequence belongs to the imidazoleglycerol-phosphate dehydratase family.

It localises to the cytoplasm. It carries out the reaction D-erythro-1-(imidazol-4-yl)glycerol 3-phosphate = 3-(imidazol-4-yl)-2-oxopropyl phosphate + H2O. It participates in amino-acid biosynthesis; L-histidine biosynthesis; L-histidine from 5-phospho-alpha-D-ribose 1-diphosphate: step 6/9. In Saccharopolyspora erythraea (strain ATCC 11635 / DSM 40517 / JCM 4748 / NBRC 13426 / NCIMB 8594 / NRRL 2338), this protein is Imidazoleglycerol-phosphate dehydratase.